Consider the following 59-residue polypeptide: Cecropin-B1 (59 aa).

The N-terminal stretch at Met1–Ala23 is a signal peptide. Leu57 carries the leucine amide modification.

Belongs to the cecropin family.

It localises to the secreted. Cecropins have lytic and antibacterial activity against several Gram-positive and Gram-negative bacteria. The sequence is that of Cecropin-B1 (CECB1) from Culex pipiens pipiens (Northern house mosquito).